The following is a 606-amino-acid chain: NADH-ubiquinone oxidoreductase chain 5 (606 aa).

16 helical membrane passes run 1–21 (MNLF…PIMV), 35–55 (YVKN…MMYL), 87–107 (LMFM…SMWY), 114–134 (INQF…LVTA), 140–160 (LFIG…WWFG), 171–191 (AILY…WFLS), 211–233 (FPLM…HPWL), 241–261 (TPVS…FLLV), 272–292 (LIQT…AICA), 301–320 (IIAF…IGLN), 325–347 (AFLH…GSII), 366–386 (LPFT…MPFL), 413–433 (LTAT…ALLG), 457–477 (LLIG…PVIT), 482–502 (MPLH…IIAF), and 582–602 (GLIK…MILF).

It belongs to the complex I subunit 5 family. As to quaternary structure, core subunit of respiratory chain NADH dehydrogenase (Complex I) which is composed of 45 different subunits.

It is found in the mitochondrion inner membrane. The enzyme catalyses a ubiquinone + NADH + 5 H(+)(in) = a ubiquinol + NAD(+) + 4 H(+)(out). Functionally, core subunit of the mitochondrial membrane respiratory chain NADH dehydrogenase (Complex I) which catalyzes electron transfer from NADH through the respiratory chain, using ubiquinone as an electron acceptor. Essential for the catalytic activity and assembly of complex I. The polypeptide is NADH-ubiquinone oxidoreductase chain 5 (MT-ND5) (Balaenoptera musculus (Blue whale)).